Reading from the N-terminus, the 355-residue chain is Phosphate acyltransferase (355 aa).

The protein belongs to the PlsX family. In terms of assembly, homodimer. Probably interacts with PlsY.

Its subcellular location is the cytoplasm. The catalysed reaction is a fatty acyl-[ACP] + phosphate = an acyl phosphate + holo-[ACP]. The protein operates within lipid metabolism; phospholipid metabolism. Catalyzes the reversible formation of acyl-phosphate (acyl-PO(4)) from acyl-[acyl-carrier-protein] (acyl-ACP). This enzyme utilizes acyl-ACP as fatty acyl donor, but not acyl-CoA. The polypeptide is Phosphate acyltransferase (Erythrobacter litoralis (strain HTCC2594)).